Consider the following 308-residue polypeptide: Cyclopropane mycolic acid synthase 2 (308 aa).

Residues 44-45, 79-87, 105-110, and 137-138 each bind S-adenosyl-L-methionine; these read YS, LLDIGCGWG, TLSANQ, and WE. The active site involves Cys290.

The protein belongs to the CFA/CMAS family. In terms of assembly, homodimer.

Its subcellular location is the cytoplasm. It carries out the reaction a 1-acyl-2-(9Z)-enoyl-sn-glycero-3-phospholipid + S-adenosyl-L-methionine = a 1-acyl-2-(9-cyclopronane)-acyl-sn-glycero-3-phospholipid + S-adenosyl-L-homocysteine + H(+). It participates in lipid metabolism; mycolic acid biosynthesis. Its function is as follows. Catalyzes the formation of trans cyclopropanated ketomycolate or methoxymycolate through the conversion of a double bond to a cyclopropane ring at the proximal position of an oxygenated mycolic acid via the transfer of a methylene group from S-adenosyl-L-methionine. In the absence of MmaA2, CmaA2 has a non-specific cis-cyclopropanating activity and is able to catalyze the conversion of a double bond to a cis cyclopropane ring at the distal position of an alpha mycolic acid. Cyclopropanated mycolic acids are key factors participating in cell envelope permeability, host immunomodulation and persistence. The polypeptide is Cyclopropane mycolic acid synthase 2 (cmaA2) (Mycobacterium leprae (strain TN)).